Here is a 504-residue protein sequence, read N- to C-terminus: Prenylcysteine oxidase 1 (504 aa).

The first 28 residues, 1-28 (MGRFAATLVGSLFGLGLLLCGLGRLASA), serve as a signal peptide directing secretion. N-linked (GlcNAc...) asparagine glycans are attached at residues Asn196, Asn322, and Asn352.

It belongs to the prenylcysteine oxidase family. FAD is required as a cofactor. In terms of tissue distribution, expressed mainly in cerebrum.

The protein localises to the lysosome. The catalysed reaction is an S-polyprenyl-L-cysteine + O2 + H2O = a polyprenal + L-cysteine + H2O2. It carries out the reaction S-(2E,6E)-farnesyl-L-cysteine + O2 + H2O = (2E,6E)-farnesal + L-cysteine + H2O2. The enzyme catalyses [(2E,6E,10E)-geranylgeranyl]-L-cysteine + O2 + H2O = (2E,6E,10E)-geranylgeranial + L-cysteine + H2O2. Its function is as follows. Prenylcysteine oxidase that cleaves the thioether bond of prenyl-L-cysteines, such as farnesylcysteine and geranylgeranylcysteine. Only active against free prenylcysteines and not prenylcysteine residues within prenylated proteins or peptides. Involved in the final step in the degradation of prenylated proteins, by degrading prenylcysteines after the protein has been degraded. This chain is Prenylcysteine oxidase 1, found in Rattus norvegicus (Rat).